The primary structure comprises 368 residues: Agmatine deiminase (368 aa).

Cys357 acts as the Amidino-cysteine intermediate in catalysis.

Belongs to the agmatine deiminase family. In terms of assembly, homodimer.

The catalysed reaction is agmatine + H2O = N-carbamoylputrescine + NH4(+). It participates in amine and polyamine biosynthesis; putrescine biosynthesis via agmatine pathway; N-carbamoylputrescine from agmatine: step 1/1. In terms of biological role, mediates the hydrolysis of agmatine into N-carbamoylputrescine in the arginine decarboxylase (ADC) pathway of putrescine biosynthesis, a basic polyamine. The polypeptide is Agmatine deiminase (Pseudomonas fluorescens (strain SBW25)).